Here is a 271-residue protein sequence, read N- to C-terminus: Tryptophan synthase alpha chain (271 aa).

Residues glutamate 49 and aspartate 60 each act as proton acceptor in the active site.

This sequence belongs to the TrpA family. As to quaternary structure, tetramer of two alpha and two beta chains.

It catalyses the reaction (1S,2R)-1-C-(indol-3-yl)glycerol 3-phosphate + L-serine = D-glyceraldehyde 3-phosphate + L-tryptophan + H2O. It participates in amino-acid biosynthesis; L-tryptophan biosynthesis; L-tryptophan from chorismate: step 5/5. Its function is as follows. The alpha subunit is responsible for the aldol cleavage of indoleglycerol phosphate to indole and glyceraldehyde 3-phosphate. The sequence is that of Tryptophan synthase alpha chain from Rhizorhabdus wittichii (strain DSM 6014 / CCUG 31198 / JCM 15750 / NBRC 105917 / EY 4224 / RW1) (Sphingomonas wittichii).